The sequence spans 595 residues: DNA mismatch repair protein MutL (595 aa).

The protein belongs to the DNA mismatch repair MutL/HexB family.

In terms of biological role, this protein is involved in the repair of mismatches in DNA. It is required for dam-dependent methyl-directed DNA mismatch repair. May act as a 'molecular matchmaker', a protein that promotes the formation of a stable complex between two or more DNA-binding proteins in an ATP-dependent manner without itself being part of a final effector complex. The protein is DNA mismatch repair protein MutL of Endomicrobium trichonymphae.